We begin with the raw amino-acid sequence, 389 residues long: MQPSFTPSGGKWLSIAVILLVIGLVVGFAAGRFTAPIQQSKELNTFAAGSLKYALGNDFNPEFNNLTGIKVGMTFSGSISGAKEVQAGKQYSVFVSASAPVLYQNLINNTHYASWQIVFSANEMAITWTNSKYAINPSWPYWFENITKNSTIVAASNASLDPSGFQAIETMKLAGILYTNWSDPFVQMAFNHNESLFLQYNKAYNTWFEKLGYKANDSLALYHQIFISKYLNHTTKLTTVEIGLDGYLTSGAADYALTYVSQAINQNLSYYKSATGGNGLPIWINLGSLNKTIDQFYEQINESGPAWDNVGNLPGAPILYSVTIINNYTSPYAVQYVYDLITQMGQHYLAMSRFDPLSQPFGINISNMPKQLQAVVTPPPSYLPVSAYE.

Positions 1-29 (MQPSFTPSGGKWLSIAVILLVIGLVVGFA) are cleaved as a signal peptide.

The protein belongs to the bacterial solute-binding protein 1 family. WtpA subfamily.

This is an uncharacterized protein from Thermoplasma volcanium (strain ATCC 51530 / DSM 4299 / JCM 9571 / NBRC 15438 / GSS1).